A 137-amino-acid polypeptide reads, in one-letter code: Histone H2B (137 aa).

Positions 1 to 10 (MPPKAADKKP) are enriched in basic and acidic residues. The interval 1-45 (MPPKAADKKPASKAPATASKAPEKKDAGKKTAASGDKKKRTKTRK) is disordered. K8 and K9 each carry N6-acetyllysine; alternate. Glycyl lysine isopeptide (Lys-Gly) (interchain with G-Cter in SUMO); alternate cross-links involve residues K8 and K9. Residue S12 is modified to Phosphoserine. Residue K13 is modified to N6-acetyllysine. K24 is subject to N6-acetyllysine; alternate. K24 participates in a covalent cross-link: Glycyl lysine isopeptide (Lys-Gly) (interchain with G-Cter in SUMO); alternate. K25 is covalently cross-linked (Glycyl lysine isopeptide (Lys-Gly) (interchain with G-Cter in SUMO)). A Glycyl lysine isopeptide (Lys-Gly) (interchain with G-Cter in ubiquitin) cross-link involves residue K131.

This sequence belongs to the histone H2B family. The nucleosome is a histone octamer containing two molecules each of H2A, H2B, H3 and H4 assembled in one H3-H4 heterotetramer and two H2A-H2B heterodimers. The octamer wraps approximately 147 bp of DNA. Monoubiquitinated by the UBC2-BRE1 complex to form H2BK123ub1. H2BK123ub1 gives a specific tag for epigenetic transcriptional activation and is also prerequisite for H3K4me and H3K79me formation. H2BK123ub1 also modulates the formation of double-strand breaks during meiosis and is a prerequisite for DNA-damage checkpoint activation. In terms of processing, phosphorylated by STE20 to form H2BS10ph during progression through meiotic prophase. May be correlated with chromosome condensation. Post-translationally, acetylated by GCN5 to form H2BK11ac and H2BK16ac. H2BK16ac can also be formed by ESA1. Acetylation of N-terminal lysines and particularly formation of H2BK11acK16ac has a positive effect on transcription. Sumoylation to form H2BK6su or H2BK7su, and probably also H2BK16su or H2BK17su, occurs preferentially near the telomeres and represses gene transcription.

Its subcellular location is the nucleus. It localises to the chromosome. Its function is as follows. Core component of nucleosome. Nucleosomes wrap and compact DNA into chromatin, limiting DNA accessibility to the cellular machineries which require DNA as a template. Histones thereby play a central role in transcription regulation, DNA repair, DNA replication and chromosomal stability. DNA accessibility is regulated via a complex set of post-translational modifications of histones, also called histone code, and nucleosome remodeling. This is Histone H2B (HTB1) from Pyricularia oryzae (strain Y34) (Rice blast fungus).